We begin with the raw amino-acid sequence, 156 residues long: Cell division protein SepF (156 aa).

Basic and acidic residues predominate over residues 23 to 36; that stretch reads SYEKEQTDMKKQQD. The disordered stretch occupies residues 23–50; it reads SYEKEQTDMKKQQDPPEQQDVTFPKAQP.

This sequence belongs to the SepF family. In terms of assembly, homodimer. Interacts with FtsZ.

Its subcellular location is the cytoplasm. Cell division protein that is part of the divisome complex and is recruited early to the Z-ring. Probably stimulates Z-ring formation, perhaps through the cross-linking of FtsZ protofilaments. Its function overlaps with FtsA. The sequence is that of Cell division protein SepF from Bacillus thuringiensis (strain Al Hakam).